The sequence spans 1379 residues: DNA-directed RNA polymerase subunit beta (1379 aa).

It belongs to the RNA polymerase beta chain family. The RNAP catalytic core consists of 2 alpha, 1 beta, 1 beta' and 1 omega subunit. When a sigma factor is associated with the core the holoenzyme is formed, which can initiate transcription.

The catalysed reaction is RNA(n) + a ribonucleoside 5'-triphosphate = RNA(n+1) + diphosphate. DNA-dependent RNA polymerase catalyzes the transcription of DNA into RNA using the four ribonucleoside triphosphates as substrates. This chain is DNA-directed RNA polymerase subunit beta, found in Rhizobium johnstonii (strain DSM 114642 / LMG 32736 / 3841) (Rhizobium leguminosarum bv. viciae).